We begin with the raw amino-acid sequence, 532 residues long: MKTPTKYFIIFILLAALAVFVSEATSKVGQQTTTTTQQVKCSGLQCTLNKLIVAVGKFTIKQILVGIVIVLATIALHQQYVITQKKGSLPGPSFVPPFFGMLFQLIFTPFSFYEKQEKYGPISWTSIMNKFVLFVTDAEINRQVFKEENAKLYLSLGAKKILTEKAIPFIEGAPHRQLRKQLLPLFTIRALSSYLPIQESIVDEHIAMWIKNGKADINARNNCRDLNMAISTGVFVGNNTPESVRDDIAKNFFVMNEGFLCLPIDLPGTTLRKAINARVRLVEIFTDIIAKSRKRMGDGEKPQSLIDLWVEHFLNCPEEERDELSNDTIIFTLLSFMFASQDALTSSLVWTVQLMAEHPDILAKVRAEQASLRPNNEKLDLDTMRQATYTRMVVSEILRFRPPAVMVPHENIEDIVIGDNVHVPKGTMILPSIWSAHFQEGGYSDPYKFDPQRFDSVRKEDVTCAKNSLVFGAGPHFCIGKELAKNQIEVFLTKLAMSTEWTHNKTPGGDEIIFGPTIFPKDGCNITIKARN.

The chain crosses the membrane as a helical span at residues 8–28; it reads FIIFILLAALAVFVSEATSKV. Heme is bound at residue cysteine 478.

The protein belongs to the cytochrome P450 family. Heme is required as a cofactor.

It localises to the membrane. In Dictyostelium discoideum (Social amoeba), this protein is Probable cytochrome P450 524A1 (cyp524A1).